A 211-amino-acid polypeptide reads, in one-letter code: Protein-L-isoaspartate O-methyltransferase (211 aa).

Residue serine 62 is part of the active site.

The protein belongs to the methyltransferase superfamily. L-isoaspartyl/D-aspartyl protein methyltransferase family.

Its subcellular location is the cytoplasm. It catalyses the reaction [protein]-L-isoaspartate + S-adenosyl-L-methionine = [protein]-L-isoaspartate alpha-methyl ester + S-adenosyl-L-homocysteine. In terms of biological role, catalyzes the methyl esterification of L-isoaspartyl residues in peptides and proteins that result from spontaneous decomposition of normal L-aspartyl and L-asparaginyl residues. It plays a role in the repair and/or degradation of damaged proteins. This Shewanella frigidimarina (strain NCIMB 400) protein is Protein-L-isoaspartate O-methyltransferase.